Here is a 118-residue protein sequence, read N- to C-terminus: Large ribosomal subunit protein bL19 (118 aa).

Belongs to the bacterial ribosomal protein bL19 family.

Functionally, this protein is located at the 30S-50S ribosomal subunit interface and may play a role in the structure and function of the aminoacyl-tRNA binding site. The sequence is that of Large ribosomal subunit protein bL19 from Saccharophagus degradans (strain 2-40 / ATCC 43961 / DSM 17024).